A 292-amino-acid polypeptide reads, in one-letter code: THO complex subunit 4B (292 aa).

Positions 1–50 (MSGGLDMSLDDIIKSNRKPTGSRGRGGIGGGNNTGGRGGSGSNSGPSRRF) are disordered. S2 carries the post-translational modification N-acetylserine. A compositionally biased stretch (gly residues) spans 23–42 (RGRGGIGGGNNTGGRGGSGS). Positions 108–185 (TKLYISNLDY…KLMKIEIVGT (78 aa)) constitute an RRM domain. A compositionally biased stretch (gly residues) spans 241–252 (GGGFGGGNFRGG). Residues 241 to 292 (GGGFGGGNFRGGRGARGRGGRGSGGRGRDENVSAEDLDAELDKYHKEAMETS) form a disordered region. A compositionally biased stretch (basic and acidic residues) spans 280–292 (ELDKYHKEAMETS).

The protein belongs to the ALYREF family. As to quaternary structure, interacts with RH15 and RH56.

It localises to the nucleus. It is found in the nucleoplasm. Its function is as follows. Export adapter involved in nuclear export of spliced and unspliced mRNA. This Arabidopsis thaliana (Mouse-ear cress) protein is THO complex subunit 4B (ALY2).